Consider the following 540-residue polypeptide: MKSLFLSAVLLQFFETCWSQFPRPCANSEGLRTKECCPVWSGDGSPCGALSGRGFCADVSVSDEPNGPQYPHSGIDDRERWPLAFFNRTCRCAGNYGGFNCGECRFGYWGSNCAEYRESVRRNIMSMSTTEQQKFISYLNLAKNTINPDYVITTGTRAEMGENGESPMFSDINTYDLFVWIHYYVSRDTFLGGPGNVWRDIDFAHESAAFLPWHRVYLLHWEQEIRKITGDFNFTIPYWDWRDAQSCEVCTDNLMGGRNALNPNLISPASVFSSWKVICTQQEEYNNQEALCNATAEGPLLRNPGNHDPNRVPRIPTTADVEFTISLPEYETGSMDRFANNSFRNVLEGFASPETGMAVQGQSTMHNALHVFMNGSMSSVQGSANDPIFLLHHAFIDSIFERWLRTHQPPRSIYPRTNAPIGHNDGYYMVPFLPLYRNGDYLLSNKALGYEYAYLLDPGQRFVQEFLTPYLQQAQQIWQWLLGAGILGALIATIVAAVIVFARRKRRRNQKRKRAPSFGERQPLLQSSSEEGSSSYQTTL.

The signal sequence occupies residues M1 to S19. Residues Q20–W480 are Lumenal, melanosome-facing. N-linked (GlcNAc...) asparagine glycosylation is present at N87. Cu cation contacts are provided by H182, H205, and H214. N-linked (GlcNAc...) asparagine glycans are attached at residues N233, N293, and N340. Residues H366 and H370 each contribute to the Cu cation site. N-linked (GlcNAc...) asparagine glycosylation occurs at N374. H393 is a Cu cation binding site. A helical transmembrane segment spans residues L481–F501. Residues A502 to L540 lie on the Cytoplasmic side of the membrane. Residues K511–L540 are disordered. Residues S527–L540 are compositionally biased toward low complexity.

It belongs to the tyrosinase family. Cu(2+) serves as cofactor.

Its subcellular location is the melanosome membrane. The catalysed reaction is 2 L-dopa + O2 = 2 L-dopaquinone + 2 H2O. It catalyses the reaction L-tyrosine + O2 = L-dopaquinone + H2O. Functionally, this is a copper-containing oxidase that functions in the formation of pigments such as melanins and other polyphenolic compounds. This is Tyrosinase (tyr) from Oryzias latipes (Japanese rice fish).